Consider the following 40-residue polypeptide: Photosystem II reaction center protein J (40 aa).

The helical transmembrane segment at 8 to 28 (IPLWMIGTLAGILVISLIGIF) threads the bilayer.

This sequence belongs to the PsbJ family. In terms of assembly, PSII is composed of 1 copy each of membrane proteins PsbA, PsbB, PsbC, PsbD, PsbE, PsbF, PsbH, PsbI, PsbJ, PsbK, PsbL, PsbM, PsbT, PsbX, PsbY, PsbZ, Psb30/Ycf12, at least 3 peripheral proteins of the oxygen-evolving complex and a large number of cofactors. It forms dimeric complexes.

It is found in the plastid membrane. Functionally, one of the components of the core complex of photosystem II (PSII). PSII is a light-driven water:plastoquinone oxidoreductase that uses light energy to abstract electrons from H(2)O, generating O(2) and a proton gradient subsequently used for ATP formation. It consists of a core antenna complex that captures photons, and an electron transfer chain that converts photonic excitation into a charge separation. In Cuscuta gronovii (Common dodder), this protein is Photosystem II reaction center protein J.